Consider the following 436-residue polypeptide: UPF0597 protein YhaM (436 aa).

It belongs to the UPF0597 family.

The sequence is that of UPF0597 protein YhaM from Shigella sonnei (strain Ss046).